Reading from the N-terminus, the 299-residue chain is CMRF35-like molecule 8 (299 aa).

The first 17 residues, 1 to 17 (MWLPWALLLLWVPGCFA), serve as a signal peptide directing secretion. The Extracellular portion of the chain corresponds to 18 to 180 (LSKCRTVAGP…TEEVVNSQLP (163 aa)). The 105-residue stretch at 19–123 (SKCRTVAGPV…HDPVVEVEVS (105 aa)) folds into the Ig-like V-type domain. Cys36 and Cys103 are joined by a disulfide. Asn83 and Asn92 each carry an N-linked (GlcNAc...) asparagine glycan. A helical membrane pass occupies residues 181 to 201 (LLLSLLALLLLLLVGASLLAW). Residues 202–299 (RMFQKWIKAG…DSDYSVIRKT (98 aa)) lie on the Cytoplasmic side of the membrane. The tract at residues 278–299 (RIAAQRPREEEPDSDYSVIRKT) is disordered. Position 293 is a phosphotyrosine (Tyr293).

It belongs to the CD300 family. As to quaternary structure, upon tyrosine-phosphorylation, interacts with PTN6/SHP-1 and PTPN11/SHP-2 and INPP5D. Post-translationally, phosphorylated on tyrosine. N-glycosylated. Expressed not only by natural killer (NK) cells but also by T-cell subsets, B-cells, dendritic cells, mast cells, granulocytes and monocytes.

Its subcellular location is the cell membrane. Inhibitory receptor which may contribute to the down-regulation of cytolytic activity in natural killer (NK) cells, and to the down-regulation of mast cell degranulation. Negatively regulates the Toll-like receptor (TLR) signaling mediated by MYD88 but not TRIF through activation of PTPN6. In Homo sapiens (Human), this protein is CMRF35-like molecule 8 (CD300A).